A 163-amino-acid polypeptide reads, in one-letter code: NADH-quinone oxidoreductase subunit I 1 (163 aa).

4Fe-4S ferredoxin-type domains lie at L53–G83 and V94–N123. C63, C66, C69, C73, C103, C106, C109, and C113 together coordinate [4Fe-4S] cluster.

This sequence belongs to the complex I 23 kDa subunit family. As to quaternary structure, NDH-1 is composed of 14 different subunits. Subunits NuoA, H, J, K, L, M, N constitute the membrane sector of the complex. The cofactor is [4Fe-4S] cluster.

It is found in the cell inner membrane. The enzyme catalyses a quinone + NADH + 5 H(+)(in) = a quinol + NAD(+) + 4 H(+)(out). NDH-1 shuttles electrons from NADH, via FMN and iron-sulfur (Fe-S) centers, to quinones in the respiratory chain. The immediate electron acceptor for the enzyme in this species is believed to be ubiquinone. Couples the redox reaction to proton translocation (for every two electrons transferred, four hydrogen ions are translocated across the cytoplasmic membrane), and thus conserves the redox energy in a proton gradient. The chain is NADH-quinone oxidoreductase subunit I 1 from Rhizobium etli (strain ATCC 51251 / DSM 11541 / JCM 21823 / NBRC 15573 / CFN 42).